We begin with the raw amino-acid sequence, 2904 residues long: MRNPKLAIIVFLLSCVIYGPVYSQVTCRRATSREWHTQPKNISVRWTLMENTCSSLTQCWSSFAETNGHFWTTGPYHFPQLCPLELQLGDLLFVSADGTLEQHGVQLIKVSKEEFDKCAILEPRKEQLVFASSINGTLQVESKWLMSGLNYFTIINRGSSHLCRFGLRIAVLVKPQLCQSSPLLRLCSGKGECRTTLKDDSFTCRCHKHFSGRYCENVDGCYEQPCLNGGTCLSEGSAYTDLPPYTCLCPAPFTGVNCSEIIGNQNCSKWCKEGACLKVSSTSYRCECFTGYTGTYCERKRLFCDSNPCRNDGRCEETANGYVCTCPGGFTGLNCETTAEADSYCKSSGCQLDEACATDKLNATCICVDPECLEQAEVCGTLPCLNGGICVVPNGQYHCRCRQGFSGKNCEEIIDFCKLLNINCLNEGLCLNRVGGYNCLCAPGWTGEFCQYLENACLAYPNRCLNGATCISMSQTTAPPHYMCTCLPGYTGPYCEAEVNECDSSPCQHQGTCTDFVGYYKCTCPSGYTGIDCEIDINSCWLPNATCPPETLCVDLPGDQLFKCHTPCPHYLQPCANGGHCVLHNITSYSCVCAPGWTGATCLVNINECVQHRCQNRATCVDEVGGYSCLCGHGYTGVHCELDFCSGHQCSEHAVCVDQQHNYTCRCMLGYEGTLCELETDECKSAPCTNNATCIDLVAGYQCLCAPGFKGRTCSESMNECWSRPCNNGGSCIDLVNDYICNCPLGFTGHDCSMPATGCTSNPCNTKGTSMCEEQQDGFKCVCHHGYTGLFCETSINHCVEGLCHHGSECVDLTKGFMCECLPGLRGRLCEVNIDDCLDKPCGALSICKDGINAYDCFCAPGFVGNNCEIEVNECLSQPCQNGASCSDELNSFSCLCLAGTTGSLCEINIDECQSSPCMNNGTCLDLSDGFKCICPSGFSGPECSMDINECVSYPCKNGGSCIDQPGNYYCRCLAPFKGLNCELLPCEAVNPCDNGAECVEEADLVLFPLGFQCRCRKGFTGPRCEVNIDECSSNPCLNGFCYDAVDGFYCLCNPGYAGVRCEQHINDCASNMCENNSTCVDLHLSYNCLCLPGWEGEYCQRETNECLSNPCKNNATCTDLLNAYRCVCPQGWTGLDCDEDVKECSSSPCLNGAHCVESDTPGEFSCTCPPFFTGPLCEQPYDPCELQRNPCLHNSTCRAQSDGTALCVCPVGFEGTRCEIDSDDCVSRPCQNRGICVDGVNSYSCFCEPGFSGLHCEEDINECASNPCQNQAVCQDLVNGFQCSCVPGYFGPHCNLDVNECDSSPCLHESVCINKPGGFACVCSAGFSGKWCELNVDECKSNPCRNNGSCIDGLNGYQCVCSRGFMGDHCERNTDECSSGPCVHGSCLDEIDAFSCQCEVGWTGHRCQININECEAHPCLNGGSCVDLLDKYACICADGFTGKNCDIDQNVCLQTSLNFSLCFNGGTCVDGPGVNFTCSCRPGFMGDFCEVEMNECCSEPCFNGAICQDLINGYQCHCRPGWTGLHCEDDINECLLQPCNQGMCIQNEPGHGYTCFCRPGFVGENCEYNYDDCLIQSCPETFSCKDGINNVSCVPVKTDTSSLPPISVVSWRSTDISTELQPTFAPVENLQHTEQPADASFGGYSGNSFLEFGGFEVAVPISVTVRFQTESMYGTLLYSASAKRSVFFIKLYISNGILQYDFLCNQKQGVQRINTAQWVADGNEHVVIFRQCLFPCVAEVTVSGVRTVRSAPGNYTSALRLQRTDHVFIGGLPRHRSPYKEAEPFHNYTGCIEIIEINKLRRFHMDHAIARNNVDNCRSQWHHEPPTSSTHSPTLLITVETPPGEWVRVLSPTQPAPVCPQGICLNGGTCRPVSLPSGASSFFCDCPLHFTGRLCEQDITVFSPRFDGNSFLELPSLTSLFQSDTYFPSRSSEDKRILYLTMKSRTPHGSLLYCREQDLGERFLHVFLQNARAVARLGCGAAHILTAVAAQNIRIDSLVAITVRYALPSQNNGQLCFIEIAADNGTANQQQKYMDEPVSEVVFGPTFLGGFPSVLELHHNSGNVSGFIGCIRELQMGSKELYVVGEAIRGQNIQNCDAAVCQHQPCRNGGTCISDAESWFCACPSLYSGKLCQFTACERNPCARGATCVPQTQLEAACLCPYGRQGLLCDEAINITRPKFSGLDEFGYSSYVAYPSIPSTGHFYEFHLKLTFANNASALRNNLILFSGQKGQGLSGDDFFALGVRNGRIVHKYNLGSGLATIISDRLNPRINIHTVHFGRYLKTGWLKVNGQKRRTGTSPGPLMGLNTFSQLYIGGYEEYTPELLPPGSRFQNSFQGCIFDMLFRTRQDGKFHALGGPDIRPLSGRNVGQCGVNPCSLVFCHNGGTCVDSGSSVYCQCVFGWKGALCSEKVSFCDAEHIPPPFCARGSTCVPLSDGYTCQCPLGSAGLHCQQAITISDPFFSGNQSSWMSFPPINIRHRTHVQLQFQTLSPEGILFYTAQHLSTHSGDFLSISLSAGFLQLRYNLGNQTIVLQSPKELDVTGVRWHTVKAGREGNSGFLIVDGESVTRNSSEGSTTLDVGANIFIGGISSLNTVSIDAVEKELVGFTGGIREVVVNGQELELTETGALDGANVGDWDGTACGYKVCKNGGHCHPSGDFSFTCICPSLWTGSRCQQSIQCLNNLCQHNSVCIHNSTSASYSCMCSLGWTGTHCDREVTLKTIRFIGNSYLKYKDPKYNSRNLMHTEVSLNFSTSAGDGLIFWMGKAESEDDDHLAVGLQDGYLKISVNLGERTALPLVYQNSFCCNYWNYLSITHNRTLIQVYVNEERVIFEDIDPFEQYVAVNYGGVIYLGGFELNRDVASVTSGVFTKGFEGSIKDVFLYQDTKQLQFLQTCEGFNVYQGEE.

Residues 1 to 23 form the signal peptide; the sequence is MRNPKLAIIVFLLSCVIYGPVYS. N-linked (GlcNAc...) asparagine glycans are attached at residues asparagine 41 and asparagine 135. EGF-like domains are found at residues 174–216, 217–259, 263–298, and 300–336; these read KPQL…RYCE, NVDG…VNCS, GNQNCSKWCKEGACLKVSSTSYRCECFTGYTGTYCE, and KRLFCDSNPCRNDGRCEETANGYVCTCPGGFTGLNCE. 6 cysteine pairs are disulfide-bonded: cysteine 178-cysteine 193, cysteine 187-cysteine 204, cysteine 206-cysteine 215, cysteine 221-cysteine 232, cysteine 226-cysteine 247, and cysteine 249-cysteine 258. Asparagine 257 and asparagine 266 each carry an N-linked (GlcNAc...) asparagine glycan. Cystine bridges form between cysteine 267-cysteine 276, cysteine 271-cysteine 286, cysteine 288-cysteine 297, cysteine 304-cysteine 315, cysteine 309-cysteine 324, and cysteine 326-cysteine 335. The N-linked (GlcNAc...) asparagine glycan is linked to asparagine 362. EGF-like domains lie at 375-411, 413-451, and 453-496; these read QAEVCGTLPCLNGGICVVPNGQYHCRCRQGFSGKNCE, IIDFCKLLNINCLNEGLCLNRVGGYNCLCAPGWTGEFCQ, and LENA…PYCE. 12 cysteine pairs are disulfide-bonded: cysteine 379–cysteine 390, cysteine 384–cysteine 399, cysteine 401–cysteine 410, cysteine 417–cysteine 430, cysteine 424–cysteine 439, cysteine 441–cysteine 450, cysteine 457–cysteine 470, cysteine 464–cysteine 484, cysteine 486–cysteine 495, cysteine 502–cysteine 513, cysteine 507–cysteine 522, and cysteine 524–cysteine 533. The region spanning 498 to 534 is the EGF-like 8; calcium-binding domain; it reads EVNECDSSPCQHQGTCTDFVGYYKCTCPSGYTGIDCE. N-linked (GlcNAc...) asparagine glycosylation occurs at asparagine 544. The EGF-like 9 domain occupies 565 to 603; it reads HTPCPHYLQPCANGGHCVLHNITSYSCVCAPGWTGATCL. 78 cysteine pairs are disulfide-bonded: cysteine 568–cysteine 581, cysteine 575–cysteine 591, cysteine 593–cysteine 602, cysteine 609–cysteine 620, cysteine 614–cysteine 629, cysteine 631–cysteine 640, cysteine 645–cysteine 656, cysteine 650–cysteine 665, cysteine 667–cysteine 676, cysteine 683–cysteine 694, cysteine 688–cysteine 703, cysteine 705–cysteine 714, cysteine 721–cysteine 732, cysteine 726–cysteine 741, cysteine 743–cysteine 752, cysteine 759–cysteine 772, cysteine 764–cysteine 781, cysteine 783–cysteine 792, cysteine 799–cysteine 810, cysteine 804–cysteine 819, cysteine 821–cysteine 830, cysteine 837–cysteine 848, cysteine 842–cysteine 857, cysteine 859–cysteine 868, cysteine 875–cysteine 886, cysteine 880–cysteine 895, cysteine 897–cysteine 906, cysteine 913–cysteine 924, cysteine 918–cysteine 933, cysteine 935–cysteine 944, cysteine 951–cysteine 962, cysteine 956–cysteine 971, cysteine 973–cysteine 982, cysteine 987–cysteine 999, cysteine 993–cysteine 1014, cysteine 1016–cysteine 1025, cysteine 1032–cysteine 1042, cysteine 1037–cysteine 1051, cysteine 1053–cysteine 1062, cysteine 1069–cysteine 1080, cysteine 1074–cysteine 1089, cysteine 1091–cysteine 1100, cysteine 1107–cysteine 1118, cysteine 1112–cysteine 1127, cysteine 1129–cysteine 1138, cysteine 1145–cysteine 1156, cysteine 1150–cysteine 1167, cysteine 1169–cysteine 1178, cysteine 1185–cysteine 1198, cysteine 1192–cysteine 1208, cysteine 1210–cysteine 1219, cysteine 1226–cysteine 1237, cysteine 1231–cysteine 1246, cysteine 1248–cysteine 1257, cysteine 1264–cysteine 1275, cysteine 1269–cysteine 1284, cysteine 1286–cysteine 1295, cysteine 1302–cysteine 1313, cysteine 1307–cysteine 1322, cysteine 1324–cysteine 1333, cysteine 1340–cysteine 1351, cysteine 1345–cysteine 1360, cysteine 1362–cysteine 1371, cysteine 1378–cysteine 1388, cysteine 1383–cysteine 1397, cysteine 1399–cysteine 1408, cysteine 1415–cysteine 1426, cysteine 1420–cysteine 1435, cysteine 1437–cysteine 1446, cysteine 1453–cysteine 1469, cysteine 1463–cysteine 1479, cysteine 1481–cysteine 1490, cysteine 1497–cysteine 1508, cysteine 1502–cysteine 1517, cysteine 1519–cysteine 1528, cysteine 1535–cysteine 1545, cysteine 1540–cysteine 1556, and cysteine 1558–cysteine 1567. A glycan (N-linked (GlcNAc...) asparagine) is linked at asparagine 585. The region spanning 605–641 is the EGF-like 10; calcium-binding domain; sequence NINECVQHRCQNRATCVDEVGGYSCLCGHGYTGVHCE. In terms of domain architecture, EGF-like 11 spans 642-677; that stretch reads LDFCSGHQCSEHAVCVDQQHNYTCRCMLGYEGTLCE. N-linked (GlcNAc...) asparagine glycosylation occurs at asparagine 662. The region spanning 679 to 715 is the EGF-like 12; calcium-binding domain; sequence ETDECKSAPCTNNATCIDLVAGYQCLCAPGFKGRTCS. A glycan (N-linked (GlcNAc...) asparagine) is linked at asparagine 691. EGF-like domains lie at 717–753, 755–793, and 795–831; these read SMNECWSRPCNNGGSCIDLVNDYICNCPLGFTGHDCS, PATGCTSNPCNTKGTSMCEEQQDGFKCVCHHGYTGLFCE, and SINHCVEGLCHHGSECVDLTKGFMCECLPGLRGRLCE. In terms of domain architecture, EGF-like 16; calcium-binding spans 833 to 869; that stretch reads NIDDCLDKPCGALSICKDGINAYDCFCAPGFVGNNCE. Positions 871–907 constitute an EGF-like 17; calcium-binding domain; the sequence is EVNECLSQPCQNGASCSDELNSFSCLCLAGTTGSLCE. Positions 909-945 constitute an EGF-like 18; calcium-binding domain; the sequence is NIDECQSSPCMNNGTCLDLSDGFKCICPSGFSGPECS. Asparagine 921 carries N-linked (GlcNAc...) asparagine glycosylation. Residues 947–983 form the EGF-like 19; calcium-binding domain; the sequence is DINECVSYPCKNGGSCIDQPGNYYCRCLAPFKGLNCE. The EGF-like 20 domain occupies 984–1026; the sequence is LLPCEAVNPCDNGAECVEEADLVLFPLGFQCRCRKGFTGPRCE. The EGF-like 21; calcium-binding domain maps to 1028-1063; that stretch reads NIDECSSNPCLNGFCYDAVDGFYCLCNPGYAGVRCE. Residues 1065-1101 form the EGF-like 22 domain; sequence HINDCASNMCENNSTCVDLHLSYNCLCLPGWEGEYCQ. N-linked (GlcNAc...) asparagine glycosylation is present at asparagine 1077. Residues 1103–1139 enclose the EGF-like 23; calcium-binding domain; it reads ETNECLSNPCKNNATCTDLLNAYRCVCPQGWTGLDCD. A glycan (N-linked (GlcNAc...) asparagine) is linked at asparagine 1115. 2 consecutive EGF-like domains span residues 1141-1179 and 1181-1220; these read DVKECSSSPCLNGAHCVESDTPGEFSCTCPPFFTGPLCE and PYDPCELQRNPCLHNSTCRAQSDGTALCVCPVGFEGTRCE. Asparagine 1195 carries an N-linked (GlcNAc...) asparagine glycan. An EGF-like 26; calcium-binding domain is found at 1222–1258; that stretch reads DSDDCVSRPCQNRGICVDGVNSYSCFCEPGFSGLHCE. Residues 1260 to 1296 form the EGF-like 27; calcium-binding domain; that stretch reads DINECASNPCQNQAVCQDLVNGFQCSCVPGYFGPHCN. Positions 1298-1334 constitute an EGF-like 28; calcium-binding domain; sequence DVNECDSSPCLHESVCINKPGGFACVCSAGFSGKWCE. The region spanning 1336–1372 is the EGF-like 29; calcium-binding domain; that stretch reads NVDECKSNPCRNNGSCIDGLNGYQCVCSRGFMGDHCE. Asparagine 1348 carries N-linked (GlcNAc...) asparagine glycosylation. One can recognise an EGF-like 30; calcium-binding domain in the interval 1374–1409; the sequence is NTDECSSGPCVHGSCLDEIDAFSCQCEVGWTGHRCQ. The region spanning 1411–1447 is the EGF-like 31; calcium-binding domain; that stretch reads NINECEAHPCLNGGSCVDLLDKYACICADGFTGKNCD. The EGF-like 32 domain occupies 1449–1491; sequence DQNVCLQTSLNFSLCFNGGTCVDGPGVNFTCSCRPGFMGDFCE. N-linked (GlcNAc...) asparagine glycans are attached at residues asparagine 1459 and asparagine 1476. The EGF-like 33; calcium-binding domain maps to 1493 to 1529; that stretch reads EMNECCSEPCFNGAICQDLINGYQCHCRPGWTGLHCE. The region spanning 1531–1568 is the EGF-like 34 domain; that stretch reads DINECLLQPCNQGMCIQNEPGHGYTCFCRPGFVGENCE. Asparagine 1591, asparagine 1755, and asparagine 1788 each carry an N-linked (GlcNAc...) asparagine glycan. One can recognise a Laminin G-like 1 domain in the interval 1640–1818; it reads ASFGGYSGNS…AIARNNVDNC (179 aa). Cystine bridges form between cysteine 1792/cysteine 1818, cysteine 1860/cysteine 1871, cysteine 1865/cysteine 1885, and cysteine 1887/cysteine 1896. The EGF-like 35 domain occupies 1856-1897; sequence PAPVCPQGICLNGGTCRPVSLPSGASSFFCDCPLHFTGRLCE. In terms of domain architecture, Laminin G-like 2 spans 1902-2102; that stretch reads VFSPRFDGNS…NIQNCDAAVC (201 aa). N-linked (GlcNAc...) asparagine glycosylation is found at asparagine 2025 and asparagine 2064. 7 disulfides stabilise this stretch: cysteine 2071–cysteine 2102, cysteine 2102–cysteine 2113, cysteine 2107–cysteine 2122, cysteine 2124–cysteine 2133, cysteine 2138–cysteine 2149, cysteine 2143–cysteine 2159, and cysteine 2161–cysteine 2170. EGF-like domains lie at 2098–2134 and 2135–2171; these read DAAVCQHQPCRNGGTCISDAESWFCACPSLYSGKLCQ and FTACERNPCARGATCVPQTQLEAACLCPYGRQGLLCD. Asparagine 2175 and asparagine 2216 each carry an N-linked (GlcNAc...) asparagine glycan. The 191-residue stretch at 2182-2372 folds into the Laminin G-like 3 domain; the sequence is SGLDEFGYSS…PLSGRNVGQC (191 aa). 7 disulfides stabilise this stretch: cysteine 2339-cysteine 2372, cysteine 2377-cysteine 2388, cysteine 2382-cysteine 2397, cysteine 2399-cysteine 2408, cysteine 2415-cysteine 2431, cysteine 2425-cysteine 2440, and cysteine 2442-cysteine 2451. 2 consecutive EGF-like domains span residues 2373–2409 and 2411–2452; these read GVNPCSLVFCHNGGTCVDSGSSVYCQCVFGWKGALCS and KVSF…LHCQ. Residues 2459 to 2642 enclose the Laminin G-like 4 domain; the sequence is DPFFSGNQSS…NVGDWDGTAC (184 aa). Asparagine 2465, asparagine 2528, and asparagine 2570 each carry an N-linked (GlcNAc...) asparagine glycan. EGF-like domains lie at 2638–2675 and 2676–2714; these read DGTACGYKVCKNGGHCHPSGDFSFTCICPSLWTGSRCQ and QSIQCLNNLCQHNSVCIHNSTSASYSCMCSLGWTGTHCD. Cystine bridges form between cysteine 2642/cysteine 2653, cysteine 2647/cysteine 2663, cysteine 2665/cysteine 2674, cysteine 2680/cysteine 2691, cysteine 2685/cysteine 2702, and cysteine 2704/cysteine 2713. Residue asparagine 2694 is glycosylated (N-linked (GlcNAc...) asparagine). The region spanning 2719–2894 is the Laminin G-like 5 domain; it reads LKTIRFIGNS…TKQLQFLQTC (176 aa). N-linked (GlcNAc...) asparagine glycans are attached at residues asparagine 2750 and asparagine 2816.

Belongs to the EYS family. Expressed in retina where it localizes between the retinal pigment epithelium and the outer nuclear layer (at protein level).

The protein localises to the cell projection. The protein resides in the cilium. Its subcellular location is the cytoplasm. It is found in the cytoskeleton. It localises to the cilium axoneme. The protein localises to the secreted. The protein resides in the extracellular space. Its subcellular location is the extracellular matrix. It is found in the interphotoreceptor matrix. Functionally, required to maintain the integrity of photoreceptor cells. Specifically required for normal morphology of the photoreceptor ciliary pocket, and might thus facilitate protein trafficking between the photoreceptor inner and outer segments via the transition zone. This chain is Protein eyes shut homolog, found in Danio rerio (Zebrafish).